Consider the following 262-residue polypeptide: Spindlin-1 (262 aa).

The interval 1–51 is disordered; it reads MKTPFGKTPGQRSRADAGHAGVSANMMKKRTSHKKHRSSVGPSKPVSQPRR. Residues Lys-7 and Lys-28 each participate in a glycyl lysine isopeptide (Lys-Gly) (interchain with G-Cter in SUMO2) cross-link. The span at 27-38 shows a compositional bias: basic residues; sequence MKKRTSHKKHRS. Residue Lys-44 is modified to N6-acetyllysine; alternate. A Glycyl lysine isopeptide (Lys-Gly) (interchain with G-Cter in SUMO2); alternate cross-link involves residue Lys-44. The segment at 53–116 is tudor-like domain 1; sequence IVGCRIQHGW…RVSALEVLPD (64 aa). The histone H3K4me3 and H3R8me2a binding stretch occupies residues 93 to 98; the sequence is GFDCVY. 2 positions are modified to phosphoserine; by AURKA: Ser-109 and Ser-124. Positions 132-193 are tudor-like domain 2; it reads MIGKAVEHMF…DYKEGDLRIM (62 aa). A region of interest (histone H3K4me3 and H3R8me2a binding) is located at residue Glu-142. Ser-199 bears the Phosphoserine mark. Residues 213–262 form a tudor-like domain 3 region; that stretch reads LVGKQVEYAKEDGSKRTGMVIHQVEAKPSVYFIKFDDDFHIYVYDLVKTS. The segment at 250–252 is histone H3K4me3 and H3R8me2a binding; that stretch reads DFH.

It belongs to the SPIN/STSY family. In terms of assembly, homodimer; may form higher-order oligomers. Interacts with TCF7L2/TCF4; the interaction is direct. Interacts with HABP4 and SERBP1. Interacts with SPINDOC; SPINDOC stabilizes SPIN1 and enhances its association with bivalent H3K4me3K9me3 mark. Interacts with SPOCD1; promoting recruitment of PIWIL4 and SPOCD1 to transposons. Post-translationally, phosphorylated during oocyte meiotic maturation. In terms of tissue distribution, highly expressed in ovarian cancer tissues.

The protein localises to the nucleus. Its subcellular location is the nucleolus. Chromatin reader that specifically recognizes and binds histone H3 both trimethylated at 'Lys-4' and 'Lys-9' (H3K4me3K9me3) and is involved in piRNA-mediated retrotransposon silencing during spermatogenesis. Plays a key role in the initiation of the PIWIL4-piRNA pathway, a pathway that directs transposon DNA methylation and silencing in the male embryonic germ cells, by promoting recruitment of DNA methylation machinery to transposons: binds young, but not old, LINE1 transposons, which are specifically marked with H3K4me3K9me3, and promotes the recruitment of PIWIL4 and SPOCD1 to transposons, leading to piRNA-directed DNA methylation. Also recognizes and binds histone H3 both trimethylated at 'Lys-4' and asymmetrically dimethylated at 'Arg-8' (H3K4me3 and H3R8me2a) and acts as an activator of Wnt signaling pathway downstream of PRMT2. In case of cancer, promotes cell cancer proliferation via activation of the Wnt signaling pathway. Overexpression induces metaphase arrest and chromosomal instability. Localizes to active rDNA loci and promotes the expression of rRNA genes. May play a role in cell-cycle regulation during the transition from gamete to embryo. Involved in oocyte meiotic resumption, a process that takes place before ovulation to resume meiosis of oocytes blocked in prophase I: may act by regulating maternal transcripts to control meiotic resumption. In Homo sapiens (Human), this protein is Spindlin-1.